A 101-amino-acid polypeptide reads, in one-letter code: Putative antitoxin HigA2 (101 aa).

The HTH cro/C1-type domain occupies 35 to 90; sequence LRELRAAQSLTQVQVAALAHIRQSRVSSIENGDIGSAQVNTLRKYVSALGGELDIT. Positions 46-65 form a DNA-binding region, H-T-H motif; sequence QVQVAALAHIRQSRVSSIEN.

In terms of biological role, putative antitoxin component of a type II toxin-antitoxin (TA) system. Its cognate toxin would be HigB2. In Mycobacterium tuberculosis (strain ATCC 25618 / H37Rv), this protein is Putative antitoxin HigA2.